Reading from the N-terminus, the 202-residue chain is Nucleoside triphosphate pyrophosphatase (202 aa).

The Proton acceptor role is filled by Asp79.

Belongs to the Maf family. A divalent metal cation serves as cofactor.

The protein localises to the cytoplasm. It carries out the reaction a ribonucleoside 5'-triphosphate + H2O = a ribonucleoside 5'-phosphate + diphosphate + H(+). The catalysed reaction is a 2'-deoxyribonucleoside 5'-triphosphate + H2O = a 2'-deoxyribonucleoside 5'-phosphate + diphosphate + H(+). Functionally, nucleoside triphosphate pyrophosphatase. May have a dual role in cell division arrest and in preventing the incorporation of modified nucleotides into cellular nucleic acids. This is Nucleoside triphosphate pyrophosphatase from Rhodospirillum rubrum (strain ATCC 11170 / ATH 1.1.1 / DSM 467 / LMG 4362 / NCIMB 8255 / S1).